A 232-amino-acid polypeptide reads, in one-letter code: Large ribosomal subunit protein uL1 (232 aa).

Belongs to the universal ribosomal protein uL1 family. In terms of assembly, part of the 50S ribosomal subunit.

Its function is as follows. Binds directly to 23S rRNA. The L1 stalk is quite mobile in the ribosome, and is involved in E site tRNA release. In terms of biological role, protein L1 is also a translational repressor protein, it controls the translation of the L11 operon by binding to its mRNA. The sequence is that of Large ribosomal subunit protein uL1 from Syntrophus aciditrophicus (strain SB).